The chain runs to 208 residues: FMN-dependent NADH:quinone oxidoreductase (208 aa).

FMN is bound by residues serine 9, 15 to 17, 96 to 99, and 140 to 143; these read SAS, MYNF, and TRGG.

It belongs to the azoreductase type 1 family. Homodimer. It depends on FMN as a cofactor.

The catalysed reaction is 2 a quinone + NADH + H(+) = 2 a 1,4-benzosemiquinone + NAD(+). It carries out the reaction N,N-dimethyl-1,4-phenylenediamine + anthranilate + 2 NAD(+) = 2-(4-dimethylaminophenyl)diazenylbenzoate + 2 NADH + 2 H(+). Functionally, quinone reductase that provides resistance to thiol-specific stress caused by electrophilic quinones. Its function is as follows. Also exhibits azoreductase activity. Catalyzes the reductive cleavage of the azo bond in aromatic azo compounds to the corresponding amines. This chain is FMN-dependent NADH:quinone oxidoreductase, found in Ralstonia nicotianae (strain ATCC BAA-1114 / GMI1000) (Ralstonia solanacearum).